We begin with the raw amino-acid sequence, 370 residues long: Anhydro-N-acetylmuramic acid kinase (370 aa).

Residue glycine 13–aspartate 20 coordinates ATP.

This sequence belongs to the anhydro-N-acetylmuramic acid kinase family.

The enzyme catalyses 1,6-anhydro-N-acetyl-beta-muramate + ATP + H2O = N-acetyl-D-muramate 6-phosphate + ADP + H(+). The protein operates within amino-sugar metabolism; 1,6-anhydro-N-acetylmuramate degradation. It functions in the pathway cell wall biogenesis; peptidoglycan recycling. Functionally, catalyzes the specific phosphorylation of 1,6-anhydro-N-acetylmuramic acid (anhMurNAc) with the simultaneous cleavage of the 1,6-anhydro ring, generating MurNAc-6-P. Is required for the utilization of anhMurNAc either imported from the medium or derived from its own cell wall murein, and thus plays a role in cell wall recycling. This chain is Anhydro-N-acetylmuramic acid kinase, found in Vibrio vulnificus (strain YJ016).